A 301-amino-acid polypeptide reads, in one-letter code: MIRVIEKGDKVSLPFSRGILTRSITSVGIDVDLAYSIAIEVQEELVKKGKTIVTKDEIRKLTYQKLIEKGFKEEAKRYIFWRRFRKMKVPLIILLGGPTGVGKSTIATELAFRLGIRSVIGTDSIREVLRKIITPELLPTIHTSTFLAWKELKGTVTDSPIVAGFESQVSAVTVGINAIIERAVREGLNAIIEGIHVVPGFVKVEGEMTFMYMLIARSREDLEARFYERTRYSKRPADYYISHLDEILEIQDYLIRRAKKFNVPVIENVELEETVSKIMEDIMQKTIEIMKGKGLDLLEEP.

An ATP-cone domain is found at 2–89; that stretch reads IRVIEKGDKV…FWRRFRKMKV (88 aa).

This sequence belongs to the 2-phosphoglycerate kinase family. A divalent metal cation is required as a cofactor.

The catalysed reaction is (2R)-2-phosphoglycerate + ATP = (2R)-2,3-bisphosphoglycerate + ADP + H(+). The protein operates within thermoadapter biosynthesis; cyclic 2,3-diphosphoglycerate biosynthesis; cyclic 2,3-diphosphoglycerate from 2-phospho-D-glycerate: step 1/2. Functionally, catalyzes the phosphorylation of 2-phosphoglycerate to 2,3-diphosphoglycerate. Involved in the biosynthesis of cyclic 2,3-bisphosphoglycerate, a thermoprotectant. The sequence is that of 2-phosphoglycerate kinase from Pyrococcus horikoshii (strain ATCC 700860 / DSM 12428 / JCM 9974 / NBRC 100139 / OT-3).